Reading from the N-terminus, the 1670-residue chain is Protein TASOR (1670 aa).

A disordered region spans residues 1-110 (MATAVETEAC…QIPRKSREKK (110 aa)). Position 2 is an N-acetylalanine (Ala-2). A compositionally biased stretch (polar residues) spans 67 to 78 (QSLSHEQPQDSS). A Phosphoserine modification is found at Ser-344. Lys-586 is covalently cross-linked (Glycyl lysine isopeptide (Lys-Gly) (interchain with G-Cter in SUMO2)). A phosphoserine mark is found at Ser-633, Ser-636, Ser-673, and Ser-800. Residues Lys-823 and Lys-832 each participate in a glycyl lysine isopeptide (Lys-Gly) (interchain with G-Cter in SUMO2) cross-link. Residue Ser-843 is modified to Phosphoserine. Residue Lys-872 forms a Glycyl lysine isopeptide (Lys-Gly) (interchain with G-Cter in SUMO2) linkage. The segment at 921-947 (TGGNARSPEDQLGKHGEKQTPGMKSPE) is disordered. 3 positions are modified to phosphoserine: Ser-927, Ser-971, and Ser-979. A compositionally biased stretch (basic and acidic residues) spans 927–938 (SPEDQLGKHGEK). Phosphothreonine occurs at positions 982 and 1049. Residue Ser-1103 is modified to Phosphoserine. Residues 1532-1545 (ETKGSRGTDQKKNT) show a composition bias toward basic and acidic residues. Disordered regions lie at residues 1532-1558 (ETKG…VQNS) and 1638-1670 (FLSA…SQEK). Composition is skewed to polar residues over residues 1546–1558 (QIEL…VQNS) and 1659–1670 (KSDSSRPYSQEK). Residue Ser-1552 is modified to Phosphoserine.

It belongs to the TASOR family. In terms of assembly, component of the HUSH complex; at least composed of TASOR, PPHLN1 and MPHOSPH8. Interacts with MORC2; the interaction associateS MORC2 with the HUSH complex which recruits MORC2 to heterochromatic loci. Interacts with ZNF638; leading to recruitment of the HUSH complex to unintegrated retroviral DNA. Interacts with INPP5A, EML1, SV1L, GPSM2, ITGB3BP, CNTN1, ETFA, PSMD8, S100A10, MPHOSPH8, TMEM100, ALB, PARPBP, HCFC2, NCBP1 and SETDB1.

The protein resides in the nucleus. Its subcellular location is the chromosome. Component of the HUSH complex, a multiprotein complex that mediates epigenetic repression. The HUSH complex is recruited to genomic loci rich in H3K9me3 and is required to maintain transcriptional silencing by promoting recruitment of SETDB1, a histone methyltransferase that mediates further deposition of H3K9me3, as well as MORC2. Also represses L1 retrotransposons in collaboration with MORC2 and, probably, SETDB1, the silencing is dependent of repressive epigenetic modifications, such as H3K9me3 mark. Silencing events often occur within introns of transcriptionally active genes, and lead to the down-regulation of host gene expression. The HUSH complex is also involved in the silencing of unintegrated retroviral DNA by being recruited by ZNF638: some part of the retroviral DNA formed immediately after infection remains unintegrated in the host genome and is transcriptionally repressed. Plays a crucial role in early embryonic development. Involved in the organization of spindle poles and spindle apparatus assembly during zygotic division. Plays an important role in maintaining epiblast fitness or potency. This is Protein TASOR from Homo sapiens (Human).